A 213-amino-acid polypeptide reads, in one-letter code: MKIIEVDEELYQYIAAQTQSIGESASDILRRLLNLPTHATSSVDFFESVASAETPKSAVHAEPVLTEKTTEVSQPKVEPVEPPKAVKKQSDEAINHIVDKVRALLNSAEFKEEPKAVVRFLSILRTLYRTNPESFAQATESLQGRTRVYFARDEGTLLVAGNHTKPKQIPDTPYWVITNTNSGRKMLMLEGAMQSMHLPEYLIDEVRPYFVSN.

3 interaction with DNA regions span residues 116–117, 145–149, and 179–185; these read AV, RTRVY, and NTNSGRK.

This sequence belongs to the SeqA family. Homodimer. Polymerizes to form helical filaments.

It is found in the cytoplasm. Its function is as follows. Negative regulator of replication initiation, which contributes to regulation of DNA replication and ensures that replication initiation occurs exactly once per chromosome per cell cycle. Binds to pairs of hemimethylated GATC sequences in the oriC region, thus preventing assembly of replication proteins and re-initiation at newly replicated origins. Repression is relieved when the region becomes fully methylated. This is Negative modulator of initiation of replication from Haemophilus parainfluenzae (strain T3T1).